A 575-amino-acid chain; its full sequence is Glycosyltransferase family 92 protein At1g27200 (575 aa).

The helical transmembrane segment at 22–44 threads the bilayer; sequence FLSQRYLILCFCCFFVLLFFLSS. A GT92 domain is found at 293-540; the sequence is LCVCTMLWNQ…TEAIEPPDWK (248 aa).

This sequence belongs to the glycosyltransferase 92 family.

The protein localises to the membrane. The chain is Glycosyltransferase family 92 protein At1g27200 from Arabidopsis thaliana (Mouse-ear cress).